The sequence spans 314 residues: BCL2/adenovirus E1B 19 kDa protein-interacting protein 2 (314 aa).

A disordered region spans residues 1–21; the sequence is MEGVELKEEWQDEDFPIPLPE. Residues 10–21 are compositionally biased toward acidic residues; that stretch reads WQDEDFPIPLPE. Phosphoserine occurs at positions 41 and 77. A disordered region spans residues 76–100; the sequence is ESGEIDLDGLDTPSENSNEFEWEDD. T87 carries the post-translational modification Phosphothreonine. Phosphoserine is present on residues S89, S92, and S114. In terms of domain architecture, CRAL-TRIO spans 147–304; that stretch reads IEPYKKVISH…CIKQVDQELN (158 aa).

It localises to the cytoplasm. The protein localises to the perinuclear region. Implicated in the suppression of cell death. Interacts with the BCL-2 and adenovirus E1B 19 kDa proteins. The polypeptide is BCL2/adenovirus E1B 19 kDa protein-interacting protein 2 (BNIP2) (Homo sapiens (Human)).